The following is an 89-amino-acid chain: Small ribosomal subunit protein uS15 (89 aa).

It belongs to the universal ribosomal protein uS15 family. As to quaternary structure, part of the 30S ribosomal subunit. Forms a bridge to the 50S subunit in the 70S ribosome, contacting the 23S rRNA.

In terms of biological role, one of the primary rRNA binding proteins, it binds directly to 16S rRNA where it helps nucleate assembly of the platform of the 30S subunit by binding and bridging several RNA helices of the 16S rRNA. Forms an intersubunit bridge (bridge B4) with the 23S rRNA of the 50S subunit in the ribosome. The chain is Small ribosomal subunit protein uS15 from Bifidobacterium longum (strain DJO10A).